The chain runs to 309 residues: HPr kinase/phosphorylase (309 aa).

Residues His138 and Lys159 contribute to the active site. 153-160 (GKSGVGKS) is a binding site for ATP. Ser160 serves as a coordination point for Mg(2+). The active-site Proton acceptor; for phosphorylation activity. Proton donor; for dephosphorylation activity is Asp177. An important for the catalytic mechanism of both phosphorylation and dephosphorylation region spans residues 201 to 210 (LEIRGLGIIN). Glu202 provides a ligand contact to Mg(2+). Arg243 is a catalytic residue. The interval 264-269 (PVRPGR) is important for the catalytic mechanism of dephosphorylation.

The protein belongs to the HPrK/P family. As to quaternary structure, homohexamer. It depends on Mg(2+) as a cofactor.

The catalysed reaction is [HPr protein]-L-serine + ATP = [HPr protein]-O-phospho-L-serine + ADP + H(+). The enzyme catalyses [HPr protein]-O-phospho-L-serine + phosphate + H(+) = [HPr protein]-L-serine + diphosphate. In terms of biological role, catalyzes the ATP- as well as the pyrophosphate-dependent phosphorylation of a specific serine residue in HPr, a phosphocarrier protein of the phosphoenolpyruvate-dependent sugar phosphotransferase system (PTS). HprK/P also catalyzes the pyrophosphate-producing, inorganic phosphate-dependent dephosphorylation (phosphorolysis) of seryl-phosphorylated HPr (P-Ser-HPr). The two antagonistic activities of HprK/P are regulated by several intracellular metabolites, which change their concentration in response to the absence or presence of rapidly metabolisable carbon sources (glucose, fructose, etc.) in the growth medium. Also phosphorylates/dephosphorylates the HPr-like catabolite repression protein crh on a specific serine residue. Therefore, by controlling the phosphorylation state of HPr and crh, HPrK/P is a sensor enzyme that plays a major role in the regulation of carbon metabolism and sugar transport: it mediates carbon catabolite repression (CCR), and regulates PTS-catalyzed carbohydrate uptake and inducer exclusion. This is HPr kinase/phosphorylase from Geobacillus thermodenitrificans (strain NG80-2).